A 408-amino-acid chain; its full sequence is Two-pore potassium channel 5 (408 aa).

Disordered regions lie at residues methionine 1 to isoleucine 29 and glutamine 58 to arginine 82. The segment covering proline 15 to isoleucine 29 has biased composition (low complexity). Residues serine 22–serine 115 lie on the Stromal side of the membrane. A compositionally biased stretch (acidic residues) spans aspartate 63–aspartate 72. A helical membrane pass occupies residues isoleucine 116 to serine 136. Residues aspartate 152 to proline 171 constitute an intramembrane region (pore-forming). A helical transmembrane segment spans residues isoleucine 178–valine 198. Over valine 199 to valine 248 the chain is Stromal. The helical transmembrane segment at cysteine 249–valine 269 threads the bilayer. The pore-forming intramembrane region spans aspartate 276 to phenylalanine 295. Residues leucine 302–leucine 322 traverse the membrane as a helical segment. Over alanine 323–leucine 408 the chain is Stromal. EF-hand domains lie at leucine 339–lysine 374 and lysine 378–leucine 408. Aspartate 352, glutamate 363, aspartate 391, asparagine 393, lysine 397, and aspartate 402 together coordinate Ca(2+).

It belongs to the two pore domain potassium channel (TC 1.A.1.7) family. In terms of assembly, homodimer. In terms of tissue distribution, expressed in hydathodes and the vascular tissues of roots, stems, leaves and flowers.

Its subcellular location is the vacuole membrane. Probable voltage-independent potassium-selective tonoplast ion channel. The sequence is that of Two-pore potassium channel 5 (TPK5) from Arabidopsis thaliana (Mouse-ear cress).